We begin with the raw amino-acid sequence, 631 residues long: NADPH oxidoreductase A (631 aa).

The Flavodoxin-like domain maps to 73-212 (ILILYGTEYG…CFDRYIDTVC (140 aa)). FMN contacts are provided by residues 79–83 (TEYGL) and 160–191 (VLAL…KRFR). An FAD-binding FR-type domain is found at 247–480 (KKPYSSKLLV…INNNPDFRLP (234 aa)). 249 to 299 (PYSSKLLVKRVLTKGDKVGIHLEFELGDSELKYVPGDALAILPDNAASEVS) contributes to the FAD binding site. 504 to 630 (QERKALGHTG…KEKRYQKDVW (127 aa)) lines the NADP(+) pocket.

The cofactor is FAD. FMN serves as cofactor.

Its function is as follows. Probable NADPH oxidoreductase that controls development beyond the mound stage. This Dictyostelium discoideum (Social amoeba) protein is NADPH oxidoreductase A (redA).